A 489-amino-acid chain; its full sequence is Lysine--tRNA ligase (489 aa).

Positions 399 and 406 each coordinate Mg(2+).

Belongs to the class-II aminoacyl-tRNA synthetase family. As to quaternary structure, homodimer. Mg(2+) is required as a cofactor.

Its subcellular location is the cytoplasm. The enzyme catalyses tRNA(Lys) + L-lysine + ATP = L-lysyl-tRNA(Lys) + AMP + diphosphate. In Malacoplasma penetrans (strain HF-2) (Mycoplasma penetrans), this protein is Lysine--tRNA ligase.